Here is a 560-residue protein sequence, read N- to C-terminus: Kinesin light chain 1 (560 aa).

Residues 27-156 (KTKQVIQGLE…HLEFMNQLKK (130 aa)) adopt a coiled-coil conformation. Positions 156–176 (KYDDDISPSEDKDSDSSKEPL) are enriched in basic and acidic residues. The interval 156 to 203 (KYDDDISPSEDKDSDSSKEPLDDLFPNDEDDPGQGIQQQHSSAAAAAQ) is disordered. Serine 162 carries the post-translational modification Phosphoserine. A compositionally biased stretch (low complexity) spans 188-203 (GQGIQQQHSSAAAAAQ). 5 TPR repeats span residues 213 to 246 (LRTLHNLVIQYASQGRYEVAVPLCKQALEDLEKT), 255 to 288 (ATMLNILALVYRDQNKYKDAANLLNDALAIREKT), 297 to 330 (AATLNNLAVLYGKRGKYKEAEPLCKRALEIREKV), 339 to 372 (AKQLNNLALLCQNQGKYEEVEYYYQRALEIYQTK), and 381 to 414 (AKTKNNLASCYLKQGKFKQAETLYKEILTRAHER). The residue at position 449 (tyrosine 449) is a Phosphotyrosine. Serine 460 bears the Phosphoserine mark. A TPR 6 repeat occupies 464-497 (TTTLKNLGALYRRQGKFEAAETLEEAALRSRKQG). A phosphoserine mark is found at serine 521 and serine 524.

Belongs to the kinesin light chain family. Oligomeric complex composed of two heavy chains and two light chains. Interacts with SPAG9. Interacts with ATCAY; may link mitochondria to KLC1 and regulate mitochondria localization into neuron projections. Interacts (via TPR repeats) with TOR1A; the interaction associates TOR1A with the kinesin oligomeric complex. Interacts with BORCS5. Interacts with MAPK8IP3/JIP3 and NTRK2/TRKB; interaction with NTRK2/TRKB is mediated by MAPK8IP3/JIP3. Interacts with CLSTN1; phosphorylation at Ser-460 inhibits interaction with CLSTN1. Post-translationally, phosphorylation at Ser-460 by ERK inhibits interaction with CLSTN1 and localization to cytoplasmic vesicles. As to expression, expressed in brain (at protein level).

Its subcellular location is the cell projection. It is found in the growth cone. It localises to the cytoplasmic vesicle. The protein localises to the cytoplasm. The protein resides in the cytoskeleton. Its function is as follows. Kinesin is a microtubule-associated force-producing protein that may play a role in organelle transport. The light chain may function in coupling of cargo to the heavy chain or in the modulation of its ATPase activity. The protein is Kinesin light chain 1 (Klc1) of Rattus norvegicus (Rat).